The following is a 469-amino-acid chain: 2-amino-4-ketopentanoate thiolase beta subunit (469 aa).

Lysine 102 is subject to N6-(pyridoxal phosphate)lysine. Residues asparagine 128 and alanine 238–asparagine 242 each bind pyridoxal 5'-phosphate.

Belongs to the threonine synthase family. As to quaternary structure, heterodimer with OrtA. Requires pyridoxal 5'-phosphate as cofactor.

The catalysed reaction is D-alanine + acetyl-CoA = (2R)-2-amino-4-oxopentanoate + CoA. Its activity is regulated as follows. Completely inhibited by p-chloromercuribenzoate (p-ClHgBzO) and acetyl-CoA, and partially inhibited by N-ethylmaleimide. Its function is as follows. Involved in the ornithine fermentation pathway. Catalyzes the thiolytic cleavage of 2-amino-4-ketopentanoate (AKP) with coenzyme A (CoA) to form acetyl-CoA and alanine. It is strictly specific for AKP. This Acetoanaerobium sticklandii (strain ATCC 12662 / DSM 519 / JCM 1433 / CCUG 9281 / NCIMB 10654 / HF) (Clostridium sticklandii) protein is 2-amino-4-ketopentanoate thiolase beta subunit.